A 366-amino-acid chain; its full sequence is uncharacterized protein (366 aa).

Positions 169–280 constitute a PINc domain; the sequence is ILDTSVIIDG…LNKVCELQKV (112 aa). Residue Asp-250 participates in Mg(2+) binding. Residues 295 to 356 enclose the TRAM domain; that stretch reads VVLPGEEMNV…LQTAAGRMIF (62 aa).

It belongs to the ycf81 family. In the central section; belongs to the PINc/VapC protein family. The cofactor is Mg(2+).

Its function is as follows. An RNase. This is an uncharacterized protein from Bacillus subtilis (strain 168).